The following is a 103-amino-acid chain: Large ribosomal subunit protein bL21 (103 aa).

Belongs to the bacterial ribosomal protein bL21 family. In terms of assembly, part of the 50S ribosomal subunit. Contacts protein L20.

Its function is as follows. This protein binds to 23S rRNA in the presence of protein L20. The sequence is that of Large ribosomal subunit protein bL21 from Aeromonas salmonicida (strain A449).